A 1440-amino-acid chain; its full sequence is Gag-Pro-Pol polyprotein (1440 aa).

Gly-2 carries N-myristoyl glycine; by host lipidation. The segment at 95-116 (EAPPSAPLAEDPQKPPPYPEQA) is disordered. The PTAP/PSAP motif motif lies at 98–101 (PSAP). A PPXY motif motif is present at residues 109 to 112 (PPPY). CCHC-type zinc fingers lie at residues 349–366 (QPCF…DCKQ) and 372–389 (GPCP…DCPQ). The Peptidase A2 domain maps to 457–535 (VQALLDTGAD…NQWTILGRDA (79 aa)). Asp-462 functions as the For protease activity; shared with dimeric partner in the catalytic mechanism. One can recognise a Reverse transcriptase domain in the interval 593–783 (LEAKHIEPYQ…GPIHFLGQVI (191 aa)). Residues Asp-659, Asp-734, Asp-735, Asp-1019, Glu-1052, Asp-1074, Asp-1135, Asp-1208, and Asp-1265 each coordinate Mg(2+). The RNase H type-1 domain maps to 1010 to 1143 (INHAPCLFSD…TDALMLAPLL (134 aa)). The Integrase catalytic domain maps to 1197-1366 (RGHAPNDIWQ…PPVPEDTLPP (170 aa)). A DNA-binding region (integrase-type) is located at residues 1371 to 1420 (KWYYYKIPGLTNSRWSGPVQSLKEAAGAALIPVGGSYLWIPWRLLKRGIC).

Interacts with human TSG101. This interaction is essential for budding and release of viral particles. The cofactor is Mg(2+). Post-translationally, specific enzymatic cleavages by the viral protease yield mature proteins. The polyprotein is cleaved during and after budding, this process is termed maturation. The protease is autoproteolytically processed at its N- and C-termini.

The protein resides in the virion. It catalyses the reaction Endonucleolytic cleavage to 5'-phosphomonoester.. The catalysed reaction is DNA(n) + a 2'-deoxyribonucleoside 5'-triphosphate = DNA(n+1) + diphosphate. Its function is as follows. Matrix protein p19 targets Gag, Gag-Pro and Gag-Pro-Pol polyproteins to the plasma membrane via a multipartite membrane binding signal, that includes its myristoylated N-terminus. Also mediates nuclear localization of the preintegration complex. Functionally, capsid protein p24 forms the conical core of the virus that encapsulates the genomic RNA-nucleocapsid complex. Nucleocapsid protein p15 is involved in the packaging and encapsidation of two copies of the genome. In terms of biological role, the aspartyl protease mediates proteolytic cleavages of Gag, Gag-Pro and Gag-Pro-Pol polyproteins during or shortly after the release of the virion from the plasma membrane. Cleavages take place as an ordered, step-wise cascade to yield mature proteins. This process is called maturation. Displays maximal activity during the budding process just prior to particle release from the cell. Hydrolyzes host EIF4GI in order to shut off the capped cellular mRNA translation. The resulting inhibition of cellular protein synthesis serves to ensure maximal viral gene expression and to evade host immune response. Its function is as follows. Reverse transcriptase (RT) is a multifunctional enzyme that converts the viral RNA genome into dsDNA in the cytoplasm, shortly after virus entry into the cell. This enzyme displays a DNA polymerase activity that can copy either DNA or RNA templates, and a ribonuclease H (RNase H) activity that cleaves the RNA strand of RNA-DNA heteroduplexes in a partially processive 3' to 5'-endonucleasic mode. Conversion of viral genomic RNA into dsDNA requires many steps. A tRNA-Pro binds to the primer-binding site (PBS) situated at the 5'-end of the viral RNA. RT uses the 3' end of the tRNA primer to perform a short round of RNA-dependent minus-strand DNA synthesis. The reading proceeds through the U5 region and ends after the repeated (R) region which is present at both ends of viral RNA. The portion of the RNA-DNA heteroduplex is digested by the RNase H, resulting in a ssDNA product attached to the tRNA primer. This ssDNA/tRNA hybridizes with the identical R region situated at the 3' end of viral RNA. This template exchange, known as minus-strand DNA strong stop transfer, can be either intra- or intermolecular. RT uses the 3' end of this newly synthesized short ssDNA to perform the RNA-dependent minus-strand DNA synthesis of the whole template. RNase H digests the RNA template except for a polypurine tract (PPT) situated at the 5' end of the genome. It is not clear if both polymerase and RNase H activities are simultaneous. RNase H probably can proceed both in a polymerase-dependent (RNA cut into small fragments by the same RT performing DNA synthesis) and a polymerase-independent mode (cleavage of remaining RNA fragments by free RTs). Secondly, RT performs DNA-directed plus-strand DNA synthesis using the PPT that has not been removed by RNase H as primer. PPT and tRNA primers are then removed by RNase H. The 3' and 5' ssDNA PBS regions hybridize to form a circular dsDNA intermediate. Strand displacement synthesis by RT to the PBS and PPT ends produces a blunt ended, linear dsDNA copy of the viral genome that includes long terminal repeats (LTRs) at both ends. Functionally, integrase catalyzes viral DNA integration into the host chromosome, by performing a series of DNA cutting and joining reactions. This enzyme activity takes place after virion entry into a cell and reverse transcription of the RNA genome in dsDNA. The first step in the integration process is 3' processing. This step requires a complex comprising the viral genome, matrix protein, and integrase. This complex is called the pre-integration complex (PIC). The integrase protein removes 2 nucleotides from each 3' end of the viral DNA, leaving recessed dinucleotides OH's at the 3' ends. In the second step, the PIC access cell chromosomes during cell division. The third step, termed strand transfer, the integrase protein joins the previously processed 3' ends to the 5'-ends of strands of target cellular DNA at the site of integration. The 5'-ends are produced by integrase-catalyzed staggered cuts, 5 bp apart. A Y-shaped, gapped, recombination intermediate results, with the 5'-ends of the viral DNA strands and the 3' ends of target DNA strands remaining unjoined, flanking a gap of 5 bp. The last step is viral DNA integration into host chromosome. This involves host DNA repair synthesis in which the 5 bp gaps between the unjoined strands (see above) are filled in and then ligated. The protein is Gag-Pro-Pol polyprotein (gag-pro-pol) of Human T-cell leukemia virus 3 (strain 2026ND) (HTLV-3).